The primary structure comprises 486 residues: Chromosomal replication initiator protein DnaA (486 aa).

The segment at 1 to 79 (MEKSKNIWSL…GYNNIVIVFT (79 aa)) is domain I, interacts with DnaA modulators. Residues 79 to 141 (TNQPPKTHSN…EEEPTNFKNP (63 aa)) are domain II. Residues 142 to 358 (FLKKRYTFEN…AAVTKLKAYI (217 aa)) are domain III, AAA+ region. The ATP site is built by glycine 186, glycine 188, lysine 189, and threonine 190. Positions 359-486 (DLDNIEIDIE…TELMNKIKKN (128 aa)) are domain IV, binds dsDNA.

It belongs to the DnaA family. In terms of assembly, oligomerizes as a right-handed, spiral filament on DNA at oriC.

It localises to the cytoplasm. Plays an essential role in the initiation and regulation of chromosomal replication. ATP-DnaA binds to the origin of replication (oriC) to initiate formation of the DNA replication initiation complex once per cell cycle. Binds the DnaA box (a 9 base pair repeat at the origin) and separates the double-stranded (ds)DNA. Forms a right-handed helical filament on oriC DNA; dsDNA binds to the exterior of the filament while single-stranded (ss)DNA is stabiized in the filament's interior. The ATP-DnaA-oriC complex binds and stabilizes one strand of the AT-rich DNA unwinding element (DUE), permitting loading of DNA polymerase. After initiation quickly degrades to an ADP-DnaA complex that is not apt for DNA replication. Binds acidic phospholipids. Its function is as follows. Binds to the bpuR promoter, possibly at 5'-TTTTTAAA-3'. The polypeptide is Chromosomal replication initiator protein DnaA (Borreliella burgdorferi (strain ATCC 35210 / DSM 4680 / CIP 102532 / B31) (Borrelia burgdorferi)).